A 497-amino-acid polypeptide reads, in one-letter code: Alkane hydroxylase MAH1 (497 aa).

Residues 3 to 23 (MLGFYVTFIFFLVCLFTYFFL) form a helical membrane-spanning segment. C444 contributes to the heme binding site.

It belongs to the cytochrome P450 family. It depends on heme as a cofactor. As to expression, expressed in the expanding regions of the inflorescence stems, specifically to the epidermal pavement cells, petioles and siliques.

The protein localises to the endoplasmic reticulum membrane. Its function is as follows. Involved in the formation of secondary alcohols and ketones in stem cuticular wax. Catalyzes the hydroxylation of a methylene unit in the middle of alkane molecules to form secondary alcohols and possibly also a second hydroxylation leading to the corresponding ketones. In Arabidopsis thaliana (Mouse-ear cress), this protein is Alkane hydroxylase MAH1.